A 259-amino-acid chain; its full sequence is Ras-related protein Rab-34 (259 aa).

The residue at position 1 (Met-1) is an N-acetylmethionine. Residues Ser-62, Val-63, Gly-64, Lys-65, Thr-66, Asp-78, Tyr-81, and Thr-84 each contribute to the GTP site. Mg(2+) is bound at residue Thr-66. Positions Arg-71 to Phe-89 match the Switch 1 motif. Positions 84 and 107 each coordinate Mg(2+). The Switch 2 motif lies at Thr-108–Ala-127. GTP-binding residues include Gly-110, Lys-167, Asp-169, and Ser-198. A Phosphoserine modification is found at Ser-241. S-geranylgeranyl cysteine attachment occurs at residues Cys-257 and Cys-258.

The protein belongs to the small GTPase superfamily. Rab family. As to quaternary structure, interacts with RILP. The GTP-bound form interacts with REP15. Mg(2+) serves as cofactor.

It localises to the cytoplasm. The protein resides in the golgi apparatus. Its subcellular location is the cytoplasmic vesicle. It is found in the phagosome. The protein localises to the phagosome membrane. It localises to the cell projection. The protein resides in the cilium. Its subcellular location is the cytoskeleton. It is found in the microtubule organizing center. The protein localises to the centrosome. It localises to the centriole. The catalysed reaction is GTP + H2O = GDP + phosphate + H(+). Its activity is regulated as follows. Regulated by guanine nucleotide exchange factors (GEFs) which promote the exchange of bound GDP for free GTP. Regulated by GTPase activating proteins (GAPs) which increase the GTP hydrolysis activity. Inhibited by GDP dissociation inhibitors (GDIs). In terms of biological role, the small GTPases Rab are key regulators of intracellular membrane trafficking, from the formation of transport vesicles to their fusion with membranes. Rabs cycle between an inactive GDP-bound form and an active GTP-bound form that is able to recruit to membranes different sets of downstream effectors directly responsible for vesicle formation, movement, tethering and fusion. RAB34 transports protein involved in the redistribution of lysosomes to the peri-Golgi region. Plays a role in the maturation of phagosomes that engulf pathogens, such as S.aureus and M.tuberculosis. Plays a role in the fusion of phagosomes with lysosomes. Involved in ciliogenesis. In particular, it is required for early steps of the intracellular cilium assembly pathway initiated by trafficking and docking of ciliary vesicles to the centrioles in the cytoplasm, followed by axoneme formation in the cytoplasm. After axoneme elongation, the centrioles migrate close to the cell surface so that ciliary vesicles can fuse with the plasma membrane to expose cilia to the extracellular space. It seems dispensable for ciliogenesis via the extracellular pathway where cilium assembly begins after migration and docking of the centriole to the plasma membrane. Also acts as a positive regulator of hedgehog signaling and regulates ciliary function. This is Ras-related protein Rab-34 from Rattus norvegicus (Rat).